Consider the following 508-residue polypeptide: Cytochrome P450 4A12 (508 aa).

The next 2 helical transmembrane spans lie at Ile10–Leu30 and Phe120–His140. Glu319 contributes to the heme binding site. Ser438 carries the post-translational modification Phosphoserine. A heme-binding site is contributed by Cys455.

It belongs to the cytochrome P450 family. It depends on heme as a cofactor. Expressed at proximal straight tubules and preglomerular arteries of the outer medulla as well in the cortex regions of kidney (at protein level).

The protein localises to the endoplasmic reticulum membrane. It is found in the microsome membrane. The catalysed reaction is an organic molecule + reduced [NADPH--hemoprotein reductase] + O2 = an alcohol + oxidized [NADPH--hemoprotein reductase] + H2O + H(+). The enzyme catalyses dodecanoate + reduced [NADPH--hemoprotein reductase] + O2 = 12-hydroxydodecanoate + oxidized [NADPH--hemoprotein reductase] + H2O + H(+). It carries out the reaction dodecanoate + reduced [NADPH--hemoprotein reductase] + O2 = (11R)-hydroxydodecanoate + oxidized [NADPH--hemoprotein reductase] + H2O + H(+). It catalyses the reaction (5Z,8Z,11Z,14Z)-eicosatetraenoate + reduced [NADPH--hemoprotein reductase] + O2 = 20-hydroxy-(5Z,8Z,11Z,14Z)-eicosatetraenoate + oxidized [NADPH--hemoprotein reductase] + H2O + H(+). The catalysed reaction is prostaglandin A1 + reduced [NADPH--hemoprotein reductase] + O2 = 20-hydroxy prostaglandin A1 + oxidized [NADPH--hemoprotein reductase] + H2O + H(+). It functions in the pathway lipid metabolism; fatty acid metabolism. With respect to regulation, activated by cytochrome b5 and phosphatidylserine. A cytochrome P450 monooxygenase involved in the metabolism of fatty acids. Catalyzes predominantly the oxidation of the terminal carbon (omega-oxidation) of saturated and unsaturated fatty acids. May act as a major omega-hydroxylase for dodecanoic (lauric) acid in kidney. At preglomerular arteries, may participate in omega-hydroxylation of (5Z,8Z,11Z,14Z)-eicosatetraenoic acid (arachidonate) to 20-hydroxyeicosatetraenoic acid (20-HETE), a signaling molecule acting both as vasoconstrictive and natriuretic with overall effect on arterial blood pressure. Can also catalyze the oxidation of the penultimate carbon (omega-1 oxidation) of fatty acids with lower efficiency, displaying a preference for the (R)-stereoisomer. Mechanistically, uses molecular oxygen inserting one oxygen atom into a substrate, and reducing the second into a water molecule, with two electrons provided by NADPH via cytochrome P450 reductase (NADPH--hemoprotein reductase). This is Cytochrome P450 4A12 (Cyp4a12) from Rattus norvegicus (Rat).